Consider the following 418-residue polypeptide: MLHPRARTMLLLSLPAVAIGIASSLILIVVMKIASALQNLLWQRLPGTLGIAQDSPLWIIGVLTLTGIAVGLVIRFSQGHAGPDPACEPLIGAPVPPSALPGLIVALILGLAGGVSLGPEHPIMTVNIALAVAIGARLLPRVNRMEWTILASAGTIGALFGTPVAAALIFSQTLNGSSEVPLWDRLFAPLMAAAAGALTTGLFFHPHFSLPIAHYGQMEMTDILSGAIVAAIAIAAGMVAVWCLPRLHAMMNQMKNPVLVLGIGGFILGILGVIGGPVSLFKGLDEMQQMVANQAFSTSDYFLLAVIKLAALVVAAASGFRGGRIFPAVFVGVALGLMLHEHVPAVPAAITVSCAILGIVLVVTRDGWLSLFMAAVVVPNTTLLPLLCIVMLPAWLLLAGKPMMMVNRPKQQPPHDNV.

Helical transmembrane passes span 10–30 (LLLS…LIVV), 54–74 (DSPL…GLVI), 99–119 (ALPG…SLGP), 120–140 (EHPI…RLLP), 149–169 (ILAS…AALI), 186–206 (LFAP…FFHP), 223–243 (ILSG…AVWC), 258–278 (VLVL…GGPV), 300–320 (DYFL…ASGF), 322–342 (GGRI…LHEH), 343–363 (VPAV…VLVV), and 371–391 (LFMA…CIVM).

Belongs to the chloride channel (TC 2.A.49) family.

The protein resides in the cell membrane. The chain is Putative ion-transport protein YfeO from Escherichia coli O8 (strain IAI1).